Here is a 410-residue protein sequence, read N- to C-terminus: Multifunctional CCA protein (410 aa).

2 residues coordinate ATP: glycine 8 and arginine 11. CTP-binding residues include glycine 8 and arginine 11. 2 residues coordinate Mg(2+): aspartate 21 and aspartate 23. ATP contacts are provided by arginine 91, arginine 137, and arginine 140. CTP contacts are provided by arginine 91, arginine 137, and arginine 140. Positions 225-326 constitute an HD domain; it reads SGIHTLMTLQ…LNVLKKTDAF (102 aa).

The protein belongs to the tRNA nucleotidyltransferase/poly(A) polymerase family. Bacterial CCA-adding enzyme type 1 subfamily. In terms of assembly, monomer. Can also form homodimers and oligomers. Requires Mg(2+) as cofactor. Ni(2+) serves as cofactor.

The enzyme catalyses a tRNA precursor + 2 CTP + ATP = a tRNA with a 3' CCA end + 3 diphosphate. The catalysed reaction is a tRNA with a 3' CCA end + 2 CTP + ATP = a tRNA with a 3' CCACCA end + 3 diphosphate. Its function is as follows. Catalyzes the addition and repair of the essential 3'-terminal CCA sequence in tRNAs without using a nucleic acid template. Adds these three nucleotides in the order of C, C, and A to the tRNA nucleotide-73, using CTP and ATP as substrates and producing inorganic pyrophosphate. tRNA 3'-terminal CCA addition is required both for tRNA processing and repair. Also involved in tRNA surveillance by mediating tandem CCA addition to generate a CCACCA at the 3' terminus of unstable tRNAs. While stable tRNAs receive only 3'-terminal CCA, unstable tRNAs are marked with CCACCA and rapidly degraded. The chain is Multifunctional CCA protein from Neisseria gonorrhoeae (strain ATCC 700825 / FA 1090).